A 264-amino-acid polypeptide reads, in one-letter code: uncharacterized protein (264 aa).

The first 26 residues, 1 to 26 (MMKKLFHSTLIVLLFFSFFGVQPIHA), serve as a signal peptide directing secretion.

This is an uncharacterized protein from Bacillus subtilis (strain 168).